A 167-amino-acid chain; its full sequence is Large ribosomal subunit protein uL5 (167 aa).

It belongs to the universal ribosomal protein uL5 family. In terms of assembly, part of the 50S ribosomal subunit; contacts the 5S rRNA and probably tRNA. Forms a bridge to the 30S subunit in the 70S ribosome.

Functionally, this is one of the proteins that bind and probably mediate the attachment of the 5S RNA into the large ribosomal subunit, where it forms part of the central protuberance. In the 70S ribosome it contacts protein S13 of the 30S subunit (bridge B1b), connecting the 2 subunits; this bridge is implicated in subunit movement. May contact the P site tRNA; the 5S rRNA and some of its associated proteins might help stabilize positioning of ribosome-bound tRNAs. This chain is Large ribosomal subunit protein uL5, found in Methanoculleus marisnigri (strain ATCC 35101 / DSM 1498 / JR1).